Here is an 884-residue protein sequence, read N- to C-terminus: Lon protease homolog 2, peroxisomal (884 aa).

Positions 12-255 (LAILPFRNKV…KATELVDRHL (244 aa)) constitute a Lon N-terminal domain. Residues 67–101 (SLLSPGVGSDSGEGGSKAPGGSAGESTKQDTKNGK) form a disordered region. A compositionally biased stretch (gly residues) spans 75 to 89 (SDSGEGGSKAPGGSA). Residue 408-415 (GPPGVGKT) participates in ATP binding. Positions 689 to 874 (VASPGVSVGL…EEVLDHAFEG (186 aa)) constitute a Lon proteolytic domain. Active-site residues include S780 and K823. The Microbody targeting signal signature appears at 882-884 (SKL).

This sequence belongs to the peptidase S16 family. Expressed in roots, leaves and panicles.

Its subcellular location is the peroxisome matrix. It catalyses the reaction Hydrolysis of proteins in presence of ATP.. In terms of biological role, ATP-dependent serine protease that mediates the selective degradation of misfolded and unassembled polypeptides in the peroxisomal matrix. Necessary for type 2 peroxisome targeting signal (PTS2)-containing protein processing and facilitates peroxisome matrix protein import. The chain is Lon protease homolog 2, peroxisomal (LON1) from Oryza sativa subsp. indica (Rice).